Here is a 248-residue protein sequence, read N- to C-terminus: 2,3-bisphosphoglycerate-dependent phosphoglycerate mutase (248 aa).

Substrate contacts are provided by residues 8–15 (RHGESEWN), 21–22 (TG), Arg-60, 87–90 (ERHY), Lys-98, 114–115 (RR), and 183–184 (GN). His-9 (tele-phosphohistidine intermediate) is an active-site residue. Glu-87 functions as the Proton donor/acceptor in the catalytic mechanism.

This sequence belongs to the phosphoglycerate mutase family. BPG-dependent PGAM subfamily.

It catalyses the reaction (2R)-2-phosphoglycerate = (2R)-3-phosphoglycerate. It participates in carbohydrate degradation; glycolysis; pyruvate from D-glyceraldehyde 3-phosphate: step 3/5. Functionally, catalyzes the interconversion of 2-phosphoglycerate and 3-phosphoglycerate. The protein is 2,3-bisphosphoglycerate-dependent phosphoglycerate mutase of Borrelia turicatae (strain 91E135).